The chain runs to 103 residues: c-Myc-binding protein (103 aa).

The protein belongs to the AMY1 family. Binds via its C-terminal region to the N-terminal region of MYC. Associates with AKAP1/S-AKAP84. Interacts with MYCBPAP. Interacts with CFAP91.

The protein localises to the cytoplasm. The protein resides in the nucleus. Functionally, may control the transcriptional activity of MYC. Stimulates the activation of E box-dependent transcription by MYC. This chain is c-Myc-binding protein (MYCBP), found in Pongo abelii (Sumatran orangutan).